The following is a 93-amino-acid chain: Phosphoribosyl-ATP pyrophosphatase (93 aa).

It belongs to the PRA-PH family.

It localises to the cytoplasm. It carries out the reaction 1-(5-phospho-beta-D-ribosyl)-ATP + H2O = 1-(5-phospho-beta-D-ribosyl)-5'-AMP + diphosphate + H(+). It functions in the pathway amino-acid biosynthesis; L-histidine biosynthesis; L-histidine from 5-phospho-alpha-D-ribose 1-diphosphate: step 2/9. This chain is Phosphoribosyl-ATP pyrophosphatase, found in Mycolicibacterium vanbaalenii (strain DSM 7251 / JCM 13017 / BCRC 16820 / KCTC 9966 / NRRL B-24157 / PYR-1) (Mycobacterium vanbaalenii).